We begin with the raw amino-acid sequence, 304 residues long: Ribosomal protein L11 methyltransferase (304 aa).

4 residues coordinate S-adenosyl-L-methionine: Thr-147, Gly-168, Asp-190, and Asn-238.

It belongs to the methyltransferase superfamily. PrmA family.

It localises to the cytoplasm. It catalyses the reaction L-lysyl-[protein] + 3 S-adenosyl-L-methionine = N(6),N(6),N(6)-trimethyl-L-lysyl-[protein] + 3 S-adenosyl-L-homocysteine + 3 H(+). Methylates ribosomal protein L11. The sequence is that of Ribosomal protein L11 methyltransferase from Prochlorococcus marinus (strain SARG / CCMP1375 / SS120).